The chain runs to 155 residues: Small ribosomal subunit protein uS7 (155 aa).

It belongs to the universal ribosomal protein uS7 family. Part of the 30S ribosomal subunit. Contacts proteins S9 and S11.

Functionally, one of the primary rRNA binding proteins, it binds directly to 16S rRNA where it nucleates assembly of the head domain of the 30S subunit. Is located at the subunit interface close to the decoding center, probably blocks exit of the E-site tRNA. The sequence is that of Small ribosomal subunit protein uS7 from Nautilia profundicola (strain ATCC BAA-1463 / DSM 18972 / AmH).